A 293-amino-acid chain; its full sequence is Calcium uniporter protein 2, mitochondrial (293 aa).

Residues 1-33 (MWSVMGLVRRTAMSSTVNKASPVRSLLGGFRCL) constitute a mitochondrion transit peptide. The helical transmembrane segment at 168–188 (ILWGGLGYSVVQIGIFVRLTF) threads the bilayer. Residues 193–201 (WDVMEPITF) carry the Selectivity filter motif. A Ca(2+)-binding site is contributed by glutamate 197. Residues 198–218 (PITFFTTATGIIVGYAYFLMT) traverse the membrane as a helical segment.

This sequence belongs to the MCU (TC 1.A.77) family.

The protein localises to the mitochondrion inner membrane. It carries out the reaction Ca(2+)(in) = Ca(2+)(out). Functionally, mitochondrial inner membrane calcium uniporter that mediates calcium uptake into mitochondria. Constitutes a pore-forming and calcium-conducting subunit. Mitochondrial calcium homeostasis plays key roles in cellular physiology and regulates cell bioenergetics, cytoplasmic calcium signals and activation of cell death pathways. The polypeptide is Calcium uniporter protein 2, mitochondrial (Arabidopsis thaliana (Mouse-ear cress)).